The primary structure comprises 468 residues: 6-phospho-beta-galactosidase (468 aa).

Residues glutamine 19, histidine 116, asparagine 159, glutamate 160, and asparagine 297 each contribute to the D-galactose 6-phosphate site. Glutamate 160 acts as the Proton donor in catalysis. Residue glutamate 375 is the Nucleophile of the active site. Residues serine 428, tryptophan 429, lysine 435, and tyrosine 437 each coordinate D-galactose 6-phosphate.

It belongs to the glycosyl hydrolase 1 family.

It carries out the reaction a 6-phospho-beta-D-galactoside + H2O = D-galactose 6-phosphate + an alcohol. It functions in the pathway carbohydrate metabolism; lactose degradation; D-galactose 6-phosphate and beta-D-glucose from lactose 6-phosphate: step 1/1. This Streptococcus pyogenes serotype M4 (strain MGAS10750) protein is 6-phospho-beta-galactosidase.